We begin with the raw amino-acid sequence, 151 residues long: MLP-like protein 329 (151 aa).

The protein belongs to the MLP family.

This is MLP-like protein 329 (MLP329) from Arabidopsis thaliana (Mouse-ear cress).